We begin with the raw amino-acid sequence, 232 residues long: Peroxisomal protein PEX21 (232 aa).

A Glycyl cysteine thioester (Cys-Gly) (interchain with G-Cter in ubiquitin) cross-link involves residue C5.

It belongs to the peroxin-21 family. Interacts with PEX7. In terms of processing, monoubiquitinated at Cys-5; acts as a signal for PEX21 extraction and is required for proper export from peroxisomes and recycling.

Its subcellular location is the cytoplasm. The protein resides in the cytosol. It localises to the peroxisome. Functionally, mediates peroxisomal import of proteins containing a C-terminal PTS2-type peroxisomal targeting signal via its interaction with PEX7. Interaction with PEX7 only takes place when PEX7 is associated with cargo proteins containing a PTS2 peroxisomal targeting signal. PEX7 along with PTS2-containing cargo proteins are then translocated through the PEX13-PEX14 docking complex together with PEX21. In Candida glabrata (strain ATCC 2001 / BCRC 20586 / JCM 3761 / NBRC 0622 / NRRL Y-65 / CBS 138) (Yeast), this protein is Peroxisomal protein PEX21 (PEX21).